A 639-amino-acid chain; its full sequence is Polypeptide N-acetylgalactosaminyltransferase 15 (639 aa).

The Cytoplasmic segment spans residues 1–11; that stretch reads MLLRKRYRHRP. A helical; Signal-anchor for type II membrane protein transmembrane segment spans residues 12–34; it reads CRLQFLLLLLMLGCVLMMVAMLH. The Lumenal portion of the chain corresponds to 35 to 639; that stretch reads PPHHTLHQTV…FDQINAVDER (605 aa). Residues 106–155 are disordered; that stretch reads RNQSQGRRGGSYRLIKQPRRQDKEAPKRDWGADEDGEVSEEEELTPFSLD. N-linked (GlcNAc...) asparagine glycosylation occurs at Asn-107. Residues 124–136 are compositionally biased toward basic and acidic residues; the sequence is RRQDKEAPKRDWG. Acidic residues predominate over residues 137 to 149; that stretch reads ADEDGEVSEEEEL. Disulfide bonds link Cys-181–Cys-412, Cys-403–Cys-482, Cys-517–Cys-536, Cys-562–Cys-575, and Cys-603–Cys-620. Residues 190 to 299 are catalytic subdomain A; it reads LPTASVILCF…PGWLEPLLSR (110 aa). Residues Asp-231 and Arg-260 each coordinate substrate. 3 residues coordinate Mn(2+): Asp-283, His-285, and His-417. The interval 358–420 is catalytic subdomain B; that stretch reads PIRSPVVPGE…PCSRVGHIYQ (63 aa). The region spanning 504–631 is the Ricin B-type lectin domain; it reads SFSGKLHNTG…GKARQQWRFD (128 aa). N-linked (GlcNAc...) asparagine glycosylation occurs at Asn-574.

It belongs to the glycosyltransferase 2 family. GalNAc-T subfamily. The cofactor is Mn(2+). As to expression, widely expressed. Highly expressed in small intestine, placenta, spleen, cerebral cortex and ovary. Expressed at intermediate level in uterus, mammary gland, stomach, cerebellum and whole brain. Weakly expressed in fetal brain, bone marrow, thyroid gland, thymus, heart, skeletal muscle, lung, liver, colon, pancreas, kidney and testis. Not expressed in leukocyte. Expressed in both normal and osteoarthritic cartilage. Expressed at low level in chondrocytes in all zones of both normal and osteoarthritic cartilage.

The protein resides in the golgi apparatus membrane. It catalyses the reaction L-seryl-[protein] + UDP-N-acetyl-alpha-D-galactosamine = a 3-O-[N-acetyl-alpha-D-galactosaminyl]-L-seryl-[protein] + UDP + H(+). It carries out the reaction L-threonyl-[protein] + UDP-N-acetyl-alpha-D-galactosamine = a 3-O-[N-acetyl-alpha-D-galactosaminyl]-L-threonyl-[protein] + UDP + H(+). Its pathway is protein modification; protein glycosylation. Functionally, catalyzes the initial reaction in O-linked oligosaccharide biosynthesis, the transfer of an N-acetyl-D-galactosamine residue to a serine or threonine residue on the protein receptor. Although it displays a much weaker activity toward all substrates tested compared to GALNT2, it is able to transfer up to seven GalNAc residues to the Muc5AC peptide, suggesting that it can fill vicinal Thr/Ser residues in cooperation with other GALNT proteins. Prefers Muc1a as substrate. This chain is Polypeptide N-acetylgalactosaminyltransferase 15 (GALNT15), found in Homo sapiens (Human).